We begin with the raw amino-acid sequence, 290 residues long: Probable protein phosphatase 2C 20 (290 aa).

In terms of domain architecture, PPM-type phosphatase spans 31-278 (AHGYDFVKGK…DDISCIVPCF (248 aa)). 4 residues coordinate Mn(2+): D68, G69, D230, and D269.

Belongs to the PP2C family. Mg(2+) serves as cofactor. Requires Mn(2+) as cofactor.

The catalysed reaction is O-phospho-L-seryl-[protein] + H2O = L-seryl-[protein] + phosphate. It catalyses the reaction O-phospho-L-threonyl-[protein] + H2O = L-threonyl-[protein] + phosphate. Its function is as follows. May be involved in defense signaling. The polypeptide is Probable protein phosphatase 2C 20 (PPC3-1.2) (Arabidopsis thaliana (Mouse-ear cress)).